The primary structure comprises 290 residues: 7-methylguanosine phosphate-specific 5'-nucleotidase A (290 aa).

Catalysis depends on D39, which acts as the Nucleophile. Positions 39 and 41 each coordinate Mg(2+). D41 serves as the catalytic Proton donor. E86 contacts CMP. E86 is a N(7)-methyl-GMP binding site. Substrate-binding positions include 154 to 155 (SA) and K203. D228 lines the Mg(2+) pocket.

Belongs to the pyrimidine 5'-nucleotidase family. Monomer.

It localises to the cytoplasm. The enzyme catalyses N(7)-methyl-GMP + H2O = N(7)-methylguanosine + phosphate. It catalyses the reaction CMP + H2O = cytidine + phosphate. The catalysed reaction is a ribonucleoside 5'-phosphate + H2O = a ribonucleoside + phosphate. Its function is as follows. Specifically hydrolyzes 7-methylguanosine monophosphate (m(7)GMP) to 7-methylguanosine and inorganic phosphate. The specific activity for m(7)GMP may protect cells against undesired salvage of m(7)GMP and its incorporation into nucleic acids. Also has weak activity for CMP. UMP and purine nucleotides are poor substrates. In Xenopus laevis (African clawed frog), this protein is 7-methylguanosine phosphate-specific 5'-nucleotidase A (Nt5c3b-a).